The primary structure comprises 974 residues: Receptor-like protein 7 (974 aa).

An N-terminal signal peptide occupies residues 1–24; that stretch reads MSFLIRSICFLILIPSFLITFVSA. Residues 25–930 are Extracellular-facing; sequence TQHLCHSDQK…EEEEEESFSW (906 aa). N-linked (GlcNAc...) asparagine glycosylation is found at Asn54 and Asn90. LRR repeat units lie at residues 96–120, 122–145, 147–166, 181–204, 206–229, and 230–252; these read LRHL…EFDK, TGLE…LLQL, KLVS…SFHY, LRNL…EFSN, RSLR…ILLI, and PNLQ…VFHE. Asn253 carries an N-linked (GlcNAc...) asparagine glycan. 5 LRR repeats span residues 254-277, 278-301, 302-325, 327-349, and 350-373; these read NSLL…ISSL, KNLT…LGNL, SHLS…IGNL, QLTN…LSNL, and TKLN…ISQL. Residues Asn279 and Asn300 are each glycosylated (N-linked (GlcNAc...) asparagine). N-linked (GlcNAc...) asparagine glycosylation is present at Asn348. An LRR 12; degenerate repeat occupies 374-396; it reads SKLKFFFADDNPFIGAILSPLLK. LRR repeat units follow at residues 397–422, 425–448, 454–472, 473–495, 496–519, 521–542, 544–570, 572–589, 590–616, 618–638, 639–662, 664–685, 687–712, 713–737, 785–809, 810–833, 834–857, and 859–882; these read IPSL…IFML, LETF…VFSS, TLYI…SDFP, SNLE…IRKG, RNLQ…LWRM, TLNS…VKAS, ESQL…SLRY, SGSN…ICGL, SSLE…LMSS, SDLD…FMNA, TKLR…LTGC, SLEV…ELNS, QKLQ…VWFG, FPQL…YFMN, LTIY…IGLL, KELR…LANL, KNLE…LGTL, and SLAW…QFQR. 3 N-linked (GlcNAc...) asparagine glycosylation sites follow: Asn434, Asn466, and Asn484. Asn529 carries an N-linked (GlcNAc...) asparagine glycan. N-linked (GlcNAc...) asparagine glycans are attached at residues Asn577, Asn603, Asn624, and Asn637. Asn737 carries N-linked (GlcNAc...) asparagine glycosylation. 3 N-linked (GlcNAc...) asparagine glycosylation sites follow: Asn816, Asn845, and Asn864. Residues 899 to 923 form a disordered region; the sequence is LENVCGHIKESTPTQTEPLETKEEE. The chain crosses the membrane as a helical span at residues 931 to 951; the sequence is IAAGLGFAPGVVFGLAMGYIV. Residues 952 to 974 lie on the Cytoplasmic side of the membrane; that stretch reads VSYKHQWFMKTFGRSKQQNTRTR.

The protein belongs to the RLP family.

It localises to the cell membrane. The chain is Receptor-like protein 7 from Arabidopsis thaliana (Mouse-ear cress).